The following is a 270-amino-acid chain: Cyclic AMP-dependent transcription factor ATF-1 (270 aa).

The disordered stretch occupies residues 1–91; the sequence is MEDSHKSNTS…DGENPGVSAV (91 aa). Polar residues predominate over residues 9–21; sequence TSETAPQSGSTVQ. The KID domain occupies 31–90; that stretch reads QVSSLSESEESQDSSDSIGSSQKTHGILARRPSYRKILKDLSSEDIRGRKGDGENPGVSA. Phosphoserine; by CaMK1, CDK3, RPS6KA4 and RPS6KA5 is present on serine 63. Residues 67–83 are compositionally biased toward basic and acidic residues; the sequence is ILKDLSSEDIRGRKGDG. At serine 197 the chain carries Phosphoserine; by HIPK2. Glycyl lysine isopeptide (Lys-Gly) (interchain with G-Cter in SUMO2) cross-links involve residues lysine 207 and lysine 214. Residues 212-270 form the bZIP domain; sequence QLKREIRLMKNREAARECRRKKKEYVKCLENRVAVLENQNKTLIEELKTLKDLYSNKSV. The basic motif stretch occupies residues 214 to 238; sequence KREIRLMKNREAARECRRKKKEYVK. Positions 240–261 are leucine-zipper; that stretch reads LENRVAVLENQNKTLIEELKTL.

This sequence belongs to the bZIP family. ATF subfamily. Binds DNA as a dimer. Interacts with HIPK2 and CDK3. Interacts with MOTS-c, a peptide produced by the mitochondrially encoded 12S rRNA MT-RNR1; the interaction occurs in the nucleus following metabolic stress. In terms of processing, phosphorylated at Ser-197 by HIPK2 in response to genotoxic stress. This phosphorylation promotes transcription repression of FTH1 and other antioxidant detoxification genes. The CDK3-mediated phosphorylation at Ser-63 promotes its transactivation and transcriptional activities. Phosphorylated at Ser-63 by RPS6KA4 and RPS6KA5 in response to mitogenic or stress stimuli.

It is found in the nucleus. This protein binds the cAMP response element (CRE) (consensus: 5'-GTGACGT[AC][AG]-3'), a sequence present in many viral and cellular promoters. Mediates PKA-induced stimulation of CRE-reporter genes. Represses the expression of FTH1 and other antioxidant detoxification genes. Triggers cell proliferation and transformation. In Bos taurus (Bovine), this protein is Cyclic AMP-dependent transcription factor ATF-1 (ATF1).